Here is a 574-residue protein sequence, read N- to C-terminus: Glycine--tRNA ligase (574 aa).

Residues R96 and E162 each coordinate substrate. Residues 194–196 (RNE), 204–209 (IRLREF), 327–328 (EC), and 450–453 (GIDR) each bind ATP. 209-213 (FTQAE) contacts substrate. Residue 446-450 (EPSYG) participates in substrate binding.

Belongs to the class-II aminoacyl-tRNA synthetase family.

It localises to the cytoplasm. It catalyses the reaction tRNA(Gly) + glycine + ATP = glycyl-tRNA(Gly) + AMP + diphosphate. Its function is as follows. Catalyzes the attachment of glycine to tRNA(Gly). The protein is Glycine--tRNA ligase of Methanococcus maripaludis (strain C7 / ATCC BAA-1331).